The following is a 698-amino-acid chain: Macrophomene synthase (698 aa).

The terpene cyclase stretch occupies residues 21–340 (MEYMYSVPLD…SCDRYSSYRR (320 aa)). Asp113 serves as a coordination point for Mg(2+). A DDXXD 1 motif is present at residues 113 to 117 (DNIAE). The NSE/DTE signature appears at 242-250 (NDFFSFNYE). Residues 341–696 (EKHQMELPIR…IQLALERLRI (356 aa)) are prenyltransferase. Positions 368 to 387 (LPNGKQLDAPTESSGKDLSD) are disordered. Isopentenyl diphosphate-binding residues include Lys417, Arg420, and His449. Positions 456 and 460 each coordinate Mg(2+). The short motif at 456–460 (DDIED) is the DDXXD 2 element. A dimethylallyl diphosphate-binding site is contributed by Arg465. Arg466 lines the isopentenyl diphosphate pocket. Residues Lys543, Thr544, Gln579, Asn586, Lys596, and Lys606 each coordinate dimethylallyl diphosphate.

It in the N-terminal section; belongs to the terpene synthase family. This sequence in the C-terminal section; belongs to the FPP/GGPP synthase family. In terms of assembly, hexamer. The cofactor is Mg(2+).

It catalyses the reaction 5 isopentenyl diphosphate + dimethylallyl diphosphate = all-trans-hexaprenyl diphosphate + 5 diphosphate. The enzyme catalyses all-trans-hexaprenyl diphosphate = macrophomene + diphosphate. Bifunctional terpene synthase that converts dimethylallyl diphosphate (DMAPP) and isopentenyl diphosphate (IPP) into macrophomene as a single product. The C-terminal prenyltransferase (PT) domain of MpMS catalyzes formation of hexaprenyl diphosphate (HexPP), whereas the N-terminal terpene cyclase (TC) domain catalyzes the cyclization of HexPP to macrophomene. This Macrophomina phaseolina (strain MS6) (Charcoal rot fungus) protein is Macrophomene synthase.